The chain runs to 398 residues: tRNA N6-adenosine threonylcarbamoyltransferase (398 aa).

A divalent metal cation is bound by residues His162, His166, and Tyr183. Substrate is bound by residues 183-187 (YVSGG), Asp215, Gly230, Glu234, and Asn329. Asp357 is a binding site for a divalent metal cation.

Belongs to the KAE1 / TsaD family. As to quaternary structure, component of the EKC/KEOPS complex composed of at least BUD32, CGI121, GON7, KAE1 and PCC1; the whole complex dimerizes. A divalent metal cation is required as a cofactor.

It localises to the cytoplasm. The protein resides in the nucleus. The catalysed reaction is L-threonylcarbamoyladenylate + adenosine(37) in tRNA = N(6)-L-threonylcarbamoyladenosine(37) in tRNA + AMP + H(+). In terms of biological role, component of the EKC/KEOPS complex that is required for the formation of a threonylcarbamoyl group on adenosine at position 37 (t(6)A37) in tRNAs that read codons beginning with adenine. The complex is probably involved in the transfer of the threonylcarbamoyl moiety of threonylcarbamoyl-AMP (TC-AMP) to the N6 group of A37. KAE1 likely plays a direct catalytic role in this reaction, but requires other protein(s) of the complex to fulfill this activity. The EKC/KEOPS complex also promotes both telomere uncapping and telomere elongation. The complex is required for efficient recruitment of transcriptional coactivators. This chain is tRNA N6-adenosine threonylcarbamoyltransferase, found in Cryptococcus neoformans var. neoformans serotype D (strain B-3501A) (Filobasidiella neoformans).